The chain runs to 167 residues: UPF0179 protein Pars_2336 (167 aa).

This sequence belongs to the UPF0179 family.

The protein is UPF0179 protein Pars_2336 of Pyrobaculum arsenaticum (strain DSM 13514 / JCM 11321 / PZ6).